A 365-amino-acid polypeptide reads, in one-letter code: Ubiquitin carboxyl-terminal hydrolase 4 (365 aa).

The N-myristoyl glycine moiety is linked to residue glycine 2. One can recognise a USP domain in the interval 23–362 (FGFENFGNTC…HGYILLYESL (340 aa)). Cysteine 32 (nucleophile) is an active-site residue. The Bipartite nuclear localization signal signature appears at 81 to 98 (KKKTGVIAPKRFVQRLKK). Residue histidine 310 is the Proton acceptor of the active site.

Belongs to the peptidase C19 family. As to expression, constitutively and ubiquitously expressed.

It is found in the nucleus. It catalyses the reaction Thiol-dependent hydrolysis of ester, thioester, amide, peptide and isopeptide bonds formed by the C-terminal Gly of ubiquitin (a 76-residue protein attached to proteins as an intracellular targeting signal).. In terms of biological role, recognizes and hydrolyzes the peptide bond at the C-terminal Gly of ubiquitin. Involved in the processing of poly-ubiquitin precursors as well as that of ubiquitinated proteins. Required for the correct development of pollen. This is Ubiquitin carboxyl-terminal hydrolase 4 (UBP4) from Arabidopsis thaliana (Mouse-ear cress).